Consider the following 492-residue polypeptide: Acetyl-coenzyme A carboxylase carboxyl transferase subunit beta, chloroplastic (492 aa).

The segment at 198 to 219 (STNGSDLTISESSNESESSNES) is disordered. The region spanning 228 to 492 (LWVQCENCYG…FHGRFPLNQN (265 aa)) is the CoA carboxyltransferase N-terminal domain. Zn(2+)-binding residues include cysteine 232, cysteine 235, cysteine 251, and cysteine 254. Residues 232-254 (CENCYGLNYKKFLKSKMYLCEQC) form a C4-type zinc finger.

The protein belongs to the AccD/PCCB family. Acetyl-CoA carboxylase is a heterohexamer composed of biotin carboxyl carrier protein, biotin carboxylase and 2 subunits each of ACCase subunit alpha and ACCase plastid-coded subunit beta (accD). The cofactor is Zn(2+).

The protein localises to the plastid. Its subcellular location is the chloroplast stroma. The catalysed reaction is N(6)-carboxybiotinyl-L-lysyl-[protein] + acetyl-CoA = N(6)-biotinyl-L-lysyl-[protein] + malonyl-CoA. It functions in the pathway lipid metabolism; malonyl-CoA biosynthesis; malonyl-CoA from acetyl-CoA: step 1/1. In terms of biological role, component of the acetyl coenzyme A carboxylase (ACC) complex. Biotin carboxylase (BC) catalyzes the carboxylation of biotin on its carrier protein (BCCP) and then the CO(2) group is transferred by the transcarboxylase to acetyl-CoA to form malonyl-CoA. This is Acetyl-coenzyme A carboxylase carboxyl transferase subunit beta, chloroplastic from Citrus sinensis (Sweet orange).